Reading from the N-terminus, the 258-residue chain is Isoprenyl transferase (258 aa).

D38 is a catalytic residue. Mg(2+) is bound at residue D38. Residues 39 to 42, W43, R51, H55, and 83 to 85 each bind substrate; these read GNGR and STE. The active-site Proton acceptor is N86. Residues W87, R89, R206, and 212–214 contribute to the substrate site; that span reads RIS. A Mg(2+)-binding site is contributed by E225.

It belongs to the UPP synthase family. As to quaternary structure, homodimer. The cofactor is Mg(2+).

Catalyzes the condensation of isopentenyl diphosphate (IPP) with allylic pyrophosphates generating different type of terpenoids. The protein is Isoprenyl transferase of Bacillus thuringiensis subsp. konkukian (strain 97-27).